Consider the following 128-residue polypeptide: MERPVPGQGYGFPRSHRLASPVEFRFVFEDACRSSDSWLTVLARPNSLAHPRLGLALSRKQIRKAVDRNRIKRLVRESFRLRQAQLGTIDYVVMARTPATSVNSAVLLRALEKHWLILTRRCSGSSSP.

The protein belongs to the RnpA family. As to quaternary structure, consists of a catalytic RNA component (M1 or rnpB) and a protein subunit.

It carries out the reaction Endonucleolytic cleavage of RNA, removing 5'-extranucleotides from tRNA precursor.. In terms of biological role, RNaseP catalyzes the removal of the 5'-leader sequence from pre-tRNA to produce the mature 5'-terminus. It can also cleave other RNA substrates such as 4.5S RNA. The protein component plays an auxiliary but essential role in vivo by binding to the 5'-leader sequence and broadening the substrate specificity of the ribozyme. This Methylococcus capsulatus (strain ATCC 33009 / NCIMB 11132 / Bath) protein is Ribonuclease P protein component.